We begin with the raw amino-acid sequence, 353 residues long: Tectonin-2 (353 aa).

Residues 44 to 93 (WIFDNDGYIRLAANHNLVLDVNGGAAKEGNTVLSYPDKKDHAKNQLWVNK) enclose the Ricin B-type lectin domain. 6 consecutive repeat copies span residues 138-173 (SAWE…HWDG), 174-210 (SKWH…DRGT), 211-247 (NKWS…NADS), 248-282 (NSWT…HYNG), 283-318 (NSWD…LKHG), and 319-353 (KDWE…KALL). A 6 X approximate tandem repeats region spans residues 138–353 (SAWERHEGEL…SAHNIYKALL (216 aa)).

The protein belongs to the tectonin family.

The protein resides in the cell surface. Its subcellular location is the cytoplasmic vesicle membrane. Functionally, probably involved in bacterial recognition. May be a lectin that function as part of a transmembrane signaling complex during phagocytosis. This Physarum polycephalum (Slime mold) protein is Tectonin-2 (TECB).